The following is a 372-amino-acid chain: Glutamate 5-kinase (372 aa).

K14 serves as a coordination point for ATP. S54, D141, and N153 together coordinate substrate. ATP is bound at residue 173–174; it reads TD. The PUA domain occupies 280-358; sequence AGAVVLDNGA…ADIAAILGFV (79 aa).

This sequence belongs to the glutamate 5-kinase family.

It is found in the cytoplasm. The enzyme catalyses L-glutamate + ATP = L-glutamyl 5-phosphate + ADP. The protein operates within amino-acid biosynthesis; L-proline biosynthesis; L-glutamate 5-semialdehyde from L-glutamate: step 1/2. Catalyzes the transfer of a phosphate group to glutamate to form L-glutamate 5-phosphate. This is Glutamate 5-kinase from Janthinobacterium sp. (strain Marseille) (Minibacterium massiliensis).